We begin with the raw amino-acid sequence, 483 residues long: Serine/threonine-protein phosphatase 2A regulatory subunit phr2AB (483 aa).

WD repeat units follow at residues 22 to 61 (SDAN…QSSK) and 88 to 129 (EIEE…IKQV). The interval 132-152 (SATTTGPSYNGSLASNNTRSP) is disordered. WD repeat units follow at residues 206–244 (AHAY…ECFN), 255–295 (DLTE…LCDN), 314–352 (EIIS…KPVK), and 369–410 (ENDC…DVCL). The disordered stretch occupies residues 421–443 (TKTLTTKMKLRSSKKEPKKPEDI). Over residues 433–443 (SKKEPKKPEDI) the composition is skewed to basic and acidic residues. A WD 7 repeat occupies 449–483 (EYTKKTLHCAWHPKDNLIAVGAANTVYLYAATENK).

This sequence belongs to the phosphatase 2A regulatory subunit B family. As to quaternary structure, PP2A consists of a trimeric holoenzyme, composed of a 37 kDa catalytic subunit (C subunit) and a 65 kDa constant regulatory subunit (A subunit), that associates with a variety of regulatory subunits (B subunit) such as phr2AB (B55) and psrA (B56 homolog). The trimer may partially dissociates into a core 'AC' dimer equally active compared to the trimer.

Its subcellular location is the cytoplasm. It is found in the cytosol. It localises to the cytoskeleton. The protein resides in the microtubule organizing center. The protein localises to the centrosome. Functionally, the B regulatory subunit might modulate substrate selectivity and catalytic activity, and might also direct the localization of the catalytic enzyme to a particular subcellular compartment. The protein is Serine/threonine-protein phosphatase 2A regulatory subunit phr2AB (phr2aB) of Dictyostelium discoideum (Social amoeba).